A 502-amino-acid chain; its full sequence is Glycerol kinase (502 aa).

Thr-14 contacts ADP. ATP-binding residues include Thr-14, Thr-15, and Ser-16. Thr-14 is a sn-glycerol 3-phosphate binding site. An ADP-binding site is contributed by Arg-18. Arg-84, Glu-85, Tyr-136, and Asp-246 together coordinate sn-glycerol 3-phosphate. Residues Arg-84, Glu-85, Tyr-136, Asp-246, and Gln-247 each coordinate glycerol. The ADP site is built by Thr-268 and Gly-311. The ATP site is built by Thr-268, Gly-311, Gln-315, and Gly-412. ADP-binding residues include Gly-412 and Asn-416.

Belongs to the FGGY kinase family. Homotetramer and homodimer (in equilibrium). Heterodimer with EIIA-Glc. Binds 1 zinc ion per glycerol kinase EIIA-Glc dimer. The zinc ion is important for dimerization.

It carries out the reaction glycerol + ATP = sn-glycerol 3-phosphate + ADP + H(+). Its pathway is polyol metabolism; glycerol degradation via glycerol kinase pathway; sn-glycerol 3-phosphate from glycerol: step 1/1. Activity of this regulatory enzyme is affected by several metabolites. Allosterically and non-competitively inhibited by fructose 1,6-bisphosphate (FBP) and unphosphorylated phosphocarrier protein EIIA-Glc (III-Glc), an integral component of the bacterial phosphotransferase (PTS) system. Functionally, key enzyme in the regulation of glycerol uptake and metabolism. Catalyzes the phosphorylation of glycerol to yield sn-glycerol 3-phosphate. The polypeptide is Glycerol kinase (Escherichia coli O8 (strain IAI1)).